A 414-amino-acid polypeptide reads, in one-letter code: MSKRRVVVTGMGMLSPVGNTVESSWKALLAGQSGIVNIEHFDTTNFSTRFAGLVKGFDCEQYMSKKDARKMDLFIQYGIAAGIQALEDSGLEVNEENAARIGVAIGSGIGGLELIETGHQALIEKGPRKVSPFFVPSTIVNMIAGNLSIMRGLRGPNIAISTACTTGLHNIGHAARMIAYGDADAMVAGGAEKASTPLGMAGFGAAKALSTRNDEPQKASRPWDKDRDGFVLGDGAGIMVLEEYEHAKARGAKIYAEVVGFGMSGDAYHMTSPSEDGSGGALAMEAAMRDAGVTGEQIGYVNAHGTSTPAGDVAEVKGIKRALGEAGTKQVLVSSTKSMTGHLLGAAGSVEAIITVMSLVDQMVPPTINLDNPEEGLGVDLVPHVARKVESMEYAMCNSFGFGGTNGSLIFKRM.

The region spanning 3 to 413 (KRRVVVTGMG…GTNGSLIFKR (411 aa)) is the Ketosynthase family 3 (KS3) domain. Catalysis depends on for beta-ketoacyl synthase activity residues C164, H304, and H342.

This sequence belongs to the thiolase-like superfamily. Beta-ketoacyl-ACP synthases family. In terms of assembly, homodimer.

The catalysed reaction is a fatty acyl-[ACP] + malonyl-[ACP] + H(+) = a 3-oxoacyl-[ACP] + holo-[ACP] + CO2. It carries out the reaction (9Z)-hexadecenoyl-[ACP] + malonyl-[ACP] + H(+) = 3-oxo-(11Z)-octadecenoyl-[ACP] + holo-[ACP] + CO2. It participates in lipid metabolism; fatty acid biosynthesis. Involved in the type II fatty acid elongation cycle. Catalyzes the elongation of a wide range of acyl-ACP by the addition of two carbons from malonyl-ACP to an acyl acceptor. Can efficiently catalyze the conversion of palmitoleoyl-ACP (cis-hexadec-9-enoyl-ACP) to cis-vaccenoyl-ACP (cis-octadec-11-enoyl-ACP), an essential step in the thermal regulation of fatty acid composition. This chain is 3-oxoacyl-[acyl-carrier-protein] synthase 2 (fabF), found in Vibrio cholerae serotype O1 (strain ATCC 39315 / El Tor Inaba N16961).